A 579-amino-acid polypeptide reads, in one-letter code: Probable serine/threonine-protein kinase kinY (579 aa).

Residues 1–24 (MINGEQTMVEDELPDQGKPMSDES) are disordered. In terms of domain architecture, Protein kinase spans 32–309 (LKVGESIGSG…HVLKQLTSLF (278 aa)). Residues 38–46 (IGSGAYGIV) and Lys59 contribute to the ATP site. Asp167 serves as the catalytic Proton acceptor.

This sequence belongs to the protein kinase superfamily. TKL Ser/Thr protein kinase family.

The enzyme catalyses L-seryl-[protein] + ATP = O-phospho-L-seryl-[protein] + ADP + H(+). It catalyses the reaction L-threonyl-[protein] + ATP = O-phospho-L-threonyl-[protein] + ADP + H(+). This is Probable serine/threonine-protein kinase kinY (kinY) from Dictyostelium discoideum (Social amoeba).